Reading from the N-terminus, the 170-residue chain is Peptide deformylase (170 aa).

Cysteine 91 and histidine 133 together coordinate Fe cation. The active site involves glutamate 134. Histidine 137 contacts Fe cation.

This sequence belongs to the polypeptide deformylase family. It depends on Fe(2+) as a cofactor.

The enzyme catalyses N-terminal N-formyl-L-methionyl-[peptide] + H2O = N-terminal L-methionyl-[peptide] + formate. Functionally, removes the formyl group from the N-terminal Met of newly synthesized proteins. Requires at least a dipeptide for an efficient rate of reaction. N-terminal L-methionine is a prerequisite for activity but the enzyme has broad specificity at other positions. The chain is Peptide deformylase from Glaesserella parasuis serovar 5 (strain SH0165) (Haemophilus parasuis).